The primary structure comprises 54 residues: Ovomucoid (54 aa).

Residues 4-54 (VDCSDYPKPVCPLDYMPLCGSDSKTYSNKCNFCNAVVESSGTLTLRHFGKC) form the Kazal-like domain. 3 disulfide bridges follow: cysteine 6–cysteine 36, cysteine 14–cysteine 33, and cysteine 22–cysteine 54.

This is the only ovomucoid third domain known to be not glycosylated.

The protein resides in the secreted. The protein is Ovomucoid of Struthio camelus (Common ostrich).